A 469-amino-acid polypeptide reads, in one-letter code: Protein RdxA (469 aa).

Residues methionine 1 to threonine 23 lie on the Cytoplasmic side of the membrane. A helical membrane pass occupies residues alanine 24–tryptophan 44. Residues aspartate 45–glutamate 75 are Periplasmic-facing. A helical transmembrane segment spans residues phenylalanine 76–alanine 96. Residues alanine 97–tryptophan 149 are Cytoplasmic-facing. Residues serine 150 to alanine 170 traverse the membrane as a helical segment. Topologically, residues proline 171–histidine 183 are periplasmic. The chain crosses the membrane as a helical span at residues proline 184–methionine 204. The Cytoplasmic portion of the chain corresponds to arginine 205 to arginine 327. 2 consecutive 4Fe-4S ferredoxin-type domains span residues lysine 242–glycine 270 and aspartate 266–proline 295. Positions 251, 254, 257, 261, 275, 278, 281, and 285 each coordinate [4Fe-4S] cluster. The chain crosses the membrane as a helical span at residues threonine 328–leucine 348. Over arginine 349–serine 469 the chain is Periplasmic.

It localises to the cell membrane. In terms of biological role, predicted to be involved in a redox process. This Cereibacter sphaeroides (strain ATCC 17023 / DSM 158 / JCM 6121 / CCUG 31486 / LMG 2827 / NBRC 12203 / NCIMB 8253 / ATH 2.4.1.) (Rhodobacter sphaeroides) protein is Protein RdxA (rdxA).